The following is a 395-amino-acid chain: 1-deoxy-D-xylulose 5-phosphate reductoisomerase (395 aa).

NADPH-binding residues include Thr-15, Gly-16, Ser-17, Ile-18, Gly-41, Asn-43, and Asn-126. Lys-127 lines the 1-deoxy-D-xylulose 5-phosphate pocket. Residue Glu-128 coordinates NADPH. Asp-152 serves as a coordination point for Mn(2+). The 1-deoxy-D-xylulose 5-phosphate site is built by Ser-153, Glu-154, Ser-178, and His-201. Glu-154 contacts Mn(2+). Gly-207 contacts NADPH. 1-deoxy-D-xylulose 5-phosphate contacts are provided by Ser-214, Asn-219, Lys-220, and Glu-223. Glu-223 provides a ligand contact to Mn(2+).

Belongs to the DXR family. It depends on Mg(2+) as a cofactor. The cofactor is Mn(2+).

It carries out the reaction 2-C-methyl-D-erythritol 4-phosphate + NADP(+) = 1-deoxy-D-xylulose 5-phosphate + NADPH + H(+). It participates in isoprenoid biosynthesis; isopentenyl diphosphate biosynthesis via DXP pathway; isopentenyl diphosphate from 1-deoxy-D-xylulose 5-phosphate: step 1/6. Catalyzes the NADPH-dependent rearrangement and reduction of 1-deoxy-D-xylulose-5-phosphate (DXP) to 2-C-methyl-D-erythritol 4-phosphate (MEP). The polypeptide is 1-deoxy-D-xylulose 5-phosphate reductoisomerase (Ruegeria pomeroyi (strain ATCC 700808 / DSM 15171 / DSS-3) (Silicibacter pomeroyi)).